The following is a 425-amino-acid chain: Serine--tRNA ligase (425 aa).

Residue 230–232 (TAE) coordinates L-serine. ATP is bound at residue 261–263 (RSE). L-serine is bound at residue glutamate 284. Position 348–351 (348–351 (EISS)) interacts with ATP. Serine 384 is a binding site for L-serine.

The protein belongs to the class-II aminoacyl-tRNA synthetase family. Type-1 seryl-tRNA synthetase subfamily. In terms of assembly, homodimer. The tRNA molecule binds across the dimer.

It localises to the cytoplasm. It catalyses the reaction tRNA(Ser) + L-serine + ATP = L-seryl-tRNA(Ser) + AMP + diphosphate + H(+). It carries out the reaction tRNA(Sec) + L-serine + ATP = L-seryl-tRNA(Sec) + AMP + diphosphate + H(+). The protein operates within aminoacyl-tRNA biosynthesis; selenocysteinyl-tRNA(Sec) biosynthesis; L-seryl-tRNA(Sec) from L-serine and tRNA(Sec): step 1/1. In terms of biological role, catalyzes the attachment of serine to tRNA(Ser). Is also able to aminoacylate tRNA(Sec) with serine, to form the misacylated tRNA L-seryl-tRNA(Sec), which will be further converted into selenocysteinyl-tRNA(Sec). The sequence is that of Serine--tRNA ligase from Streptococcus equi subsp. zooepidemicus (strain H70).